A 79-amino-acid polypeptide reads, in one-letter code: Dolichyl-diphosphooligosaccharide--protein glycosyltransferase subunit TMEM258 (79 aa).

Helical transmembrane passes span 17–37 (VFPH…AWFF) and 59–79 (VASL…GIFV).

Belongs to the OST5 family. Component of the oligosaccharyltransferase (OST) complex.

It localises to the membrane. It is found in the endoplasmic reticulum. Its subcellular location is the cytoplasm. Its pathway is protein modification; protein glycosylation. Its function is as follows. Subunit of the oligosaccharyl transferase (OST) complex that catalyzes the initial transfer of a defined glycan (Glc(3)Man(9)GlcNAc(2) in eukaryotes) from the lipid carrier dolichol-pyrophosphate to an asparagine residue within an Asn-X-Ser/Thr consensus motif in nascent polypeptide chains, the first step in protein N-glycosylation. N-glycosylation occurs cotranslationally and the complex associates with the Sec61 complex at the channel-forming translocon complex that mediates protein translocation across the endoplasmic reticulum (ER). All subunits are required for a maximal enzyme activity. The protein is Dolichyl-diphosphooligosaccharide--protein glycosyltransferase subunit TMEM258 of Danio rerio (Zebrafish).